A 474-amino-acid chain; its full sequence is ATP synthase subunit beta 2 (474 aa).

An ATP-binding site is contributed by 151–158; that stretch reads GGAGVGKT.

The protein belongs to the ATPase alpha/beta chains family. In terms of assembly, F-type ATPases have 2 components, CF(1) - the catalytic core - and CF(0) - the membrane proton channel. CF(1) has five subunits: alpha(3), beta(3), gamma(1), delta(1), epsilon(1). CF(0) has four main subunits: a(1), b(1), b'(1) and c(9-12).

The protein resides in the cell inner membrane. The catalysed reaction is ATP + H2O + 4 H(+)(in) = ADP + phosphate + 5 H(+)(out). Functionally, produces ATP from ADP in the presence of a proton gradient across the membrane. The catalytic sites are hosted primarily by the beta subunits. The chain is ATP synthase subunit beta 2 from Dinoroseobacter shibae (strain DSM 16493 / NCIMB 14021 / DFL 12).